Here is a 262-residue protein sequence, read N- to C-terminus: MAPALLLVPAALASFVLAFGTGVEFVRFTSLRPLLGGIPESGGPDARHGWLAALQDRSILASLAWDLCLLLLFVVQHSLMATEAVKAWTSRYFGVLQRSLYVACTALALQLVMRYWEATPRGPVLWEARAEPWATWVPLLCFVLHVVSWLLIFSILLVFDYAELMGLKQVYYHVLGLGEPLSLKSPRALRLFSHLRHPVCVELLTVLWVVPTLGTDRLLLALLFTLYLGLAHGLDQQDLRYLRSQLQRKLQLLSRPQDGEAE.

The Nuclear segment spans residues 1 to 4; it reads MAPA. Residues 5–28 traverse the membrane as a helical segment; the sequence is LLLVPAALASFVLAFGTGVEFVRF. Topologically, residues 29–58 are perinuclear space; sequence TSLRPLLGGIPESGGPDARHGWLAALQDRS. The helical transmembrane segment at 59 to 80 threads the bilayer; the sequence is ILASLAWDLCLLLLFVVQHSLM. The Nuclear segment spans residues 81-97; sequence ATEAVKAWTSRYFGVLQ. The helical transmembrane segment at 98-114 threads the bilayer; it reads RSLYVACTALALQLVMR. Residues 115-133 are Perinuclear space-facing; sequence YWEATPRGPVLWEARAEPW. Residues 134–164 traverse the membrane as a helical segment; that stretch reads ATWVPLLCFVLHVVSWLLIFSILLVFDYAEL. Residues 165 to 191 are Nuclear-facing; it reads MGLKQVYYHVLGLGEPLSLKSPRALRL. Residues 192-210 form a helical membrane-spanning segment; sequence FSHLRHPVCVELLTVLWVV. Residues 211–216 lie on the Perinuclear space side of the membrane; that stretch reads PTLGTD. The chain crosses the membrane as a helical span at residues 217-234; that stretch reads RLLLALLFTLYLGLAHGL. The Nuclear segment spans residues 235 to 262; that stretch reads DQQDLRYLRSQLQRKLQLLSRPQDGEAE.

This sequence belongs to the nurim family.

The protein resides in the nucleus inner membrane. The sequence is that of Nurim (Nrm) from Rattus norvegicus (Rat).